A 943-amino-acid polypeptide reads, in one-letter code: Isoleucine--tRNA ligase (943 aa).

The 'HIGH' region motif lies at 58–68 (PYANGSIHIGH). Glu567 serves as a coordination point for L-isoleucyl-5'-AMP. The short motif at 608–612 (KMSKS) is the 'KMSKS' region element. Lys611 contributes to the ATP binding site. 4 residues coordinate Zn(2+): Cys906, Cys909, Cys926, and Cys929.

It belongs to the class-I aminoacyl-tRNA synthetase family. IleS type 1 subfamily. In terms of assembly, monomer. It depends on Zn(2+) as a cofactor.

The protein resides in the cytoplasm. It catalyses the reaction tRNA(Ile) + L-isoleucine + ATP = L-isoleucyl-tRNA(Ile) + AMP + diphosphate. Its function is as follows. Catalyzes the attachment of isoleucine to tRNA(Ile). As IleRS can inadvertently accommodate and process structurally similar amino acids such as valine, to avoid such errors it has two additional distinct tRNA(Ile)-dependent editing activities. One activity is designated as 'pretransfer' editing and involves the hydrolysis of activated Val-AMP. The other activity is designated 'posttransfer' editing and involves deacylation of mischarged Val-tRNA(Ile). The polypeptide is Isoleucine--tRNA ligase (Pseudomonas aeruginosa (strain UCBPP-PA14)).